The sequence spans 64 residues: Conotoxin Cal12.4 (64 aa).

Positions 1-21 (MKLTCMLVVLLLVLPFGDLIA) are cleaved as a signal peptide.

This sequence belongs to the conotoxin O1 superfamily. Contains 4 disulfide bonds. Expressed by the venom duct.

It is found in the secreted. Its function is as follows. Probable neurotoxin. The protein is Conotoxin Cal12.4 of Californiconus californicus (California cone).